A 97-amino-acid chain; its full sequence is uncharacterized protein (97 aa).

Positions 38-97 (TSPPDWNKFSGKVSINEPTTSKSKSKSTSTSTSTSTSTSTSTSTSSSTSSTSSTTSSINK) are disordered. The segment covering 56–97 (TTSKSKSKSTSTSTSTSTSTSTSTSTSSSTSSTSSTTSSINK) has biased composition (low complexity).

This is an uncharacterized protein from Dictyostelium discoideum (Social amoeba).